Consider the following 314-residue polypeptide: Formate-nitrite transporter (314 aa).

Topologically, residues 1 to 47 (MSKGKSKYVIDPISVKTACTSEESYIRCVEYGKGKAHYPNLSLLAKA) are cytoplasmic. The helical transmembrane segment at 48–68 (ILAGVFVGVCAHASGIAGGHF) threads the bilayer. The Extracellular portion of the chain corresponds to 69-78 (YYHKLREYVG). Residues 79 to 99 (ISMSAFVYGFTFPIAFLCIIA) traverse the membrane as a helical segment. The Cytoplasmic portion of the chain corresponds to 100 to 128 (TGSDLFTGNTLAVTTALLQRKVSLLQYLR). A helical transmembrane segment spans residues 129–149 (VMSISLFGNYLGAVSFAFFVS). Residues 150-185 (HLSGAYEKHTDVTKNHIFQFLNDIAEKKISHTFIQC) lie on the Extracellular side of the membrane. A helical membrane pass occupies residues 186–206 (ICLAIGCNIFVCLAVYFVLTI). Topologically, residues 207 to 211 (KDGSG) are cytoplasmic. Residues 212–232 (MVFSVFFAVYAFAIAGYEHII) form a helical membrane-spanning segment. Over 233–257 (ANMYTLNLALMVEAKVTWSKVYFHN) the chain is Extracellular. Residues 258 to 278 (LLPTLIGNYIAGALVLACPLF) form a helical membrane-spanning segment. Residues 279 to 314 (YIYRNSYRDYERTRGDGSNCGLRSLSIEMQNGSNGN) lie on the Cytoplasmic side of the membrane.

Belongs to the FNT transporter (TC 1.A.16) family. As to quaternary structure, homopentamer.

The protein resides in the cell membrane. It localises to the vacuole membrane. It catalyses the reaction (S)-lactate(in) + H(+)(in) = (S)-lactate(out) + H(+)(out). It carries out the reaction formate(in) + H(+)(in) = formate(out) + H(+)(out). The catalysed reaction is pyruvate(out) + H(+)(out) = pyruvate(in) + H(+)(in). The enzyme catalyses acetate(out) + H(+)(out) = acetate(in) + H(+)(in). Its activity is regulated as follows. Inhibited by the Malaria Box compound MMV007839 and its derivatives BH296 and BH267.meta. Functionally, monocarboxylate-proton symporter that mediates the efflux of the waste product lactate in the intraerythrocytic parasites; active in acidic-to-neutral pH range. Transports L-lactate. The chain is Formate-nitrite transporter from Plasmodium knowlesi (strain H).